The primary structure comprises 311 residues: Probable deoxyhypusine synthase (311 aa).

The Nucleophile role is filled by Lys284.

The protein belongs to the deoxyhypusine synthase family. The cofactor is NAD(+).

The catalysed reaction is [eIF5A protein]-L-lysine + spermidine = [eIF5A protein]-deoxyhypusine + propane-1,3-diamine. The protein operates within protein modification; eIF5A hypusination. Functionally, catalyzes the NAD-dependent oxidative cleavage of spermidine and the subsequent transfer of the butylamine moiety of spermidine to the epsilon-amino group of a specific lysine residue of the eIF-5A precursor protein to form the intermediate deoxyhypusine residue. The protein is Probable deoxyhypusine synthase of Picrophilus torridus (strain ATCC 700027 / DSM 9790 / JCM 10055 / NBRC 100828 / KAW 2/3).